Reading from the N-terminus, the 231-residue chain is Ureidoacrylate amidohydrolase RutB (231 aa).

The active-site Proton acceptor is the aspartate 25. Lysine 134 is an active-site residue. Catalysis depends on cysteine 167, which acts as the Nucleophile.

It belongs to the isochorismatase family. RutB subfamily.

It catalyses the reaction (Z)-3-ureidoacrylate + H2O + H(+) = (Z)-3-aminoacrylate + NH4(+) + CO2. It carries out the reaction (Z)-3-ureidoacrylate + H2O = (Z)-3-aminoacrylate + carbamate + H(+). The catalysed reaction is (Z)-2-methylureidoacrylate + H2O + H(+) = (Z)-2-methylaminoacrylate + NH4(+) + CO2. Its function is as follows. Hydrolyzes ureidoacrylate to form aminoacrylate and carbamate. The carbamate hydrolyzes spontaneously, thereby releasing one of the nitrogen atoms of the pyrimidine ring as ammonia and one of its carbon atoms as CO2. The chain is Ureidoacrylate amidohydrolase RutB from Escherichia coli O157:H7 (strain EC4115 / EHEC).